We begin with the raw amino-acid sequence, 369 residues long: Glutamate 5-kinase (369 aa).

ATP is bound at residue K11. Residues S51, D138, and N150 each contribute to the substrate site. ATP is bound by residues 170–171 (TD) and 212–218 (TGGMATK). Residues 277–355 (NGTIVIDDGA…QDIYAVLGYE (79 aa)) form the PUA domain.

Belongs to the glutamate 5-kinase family.

Its subcellular location is the cytoplasm. It catalyses the reaction L-glutamate + ATP = L-glutamyl 5-phosphate + ADP. The protein operates within amino-acid biosynthesis; L-proline biosynthesis; L-glutamate 5-semialdehyde from L-glutamate: step 1/2. Catalyzes the transfer of a phosphate group to glutamate to form L-glutamate 5-phosphate. The polypeptide is Glutamate 5-kinase (Aliivibrio salmonicida (strain LFI1238) (Vibrio salmonicida (strain LFI1238))).